The sequence spans 454 residues: Inactive tetrahydroanabasine acetyltransferase pauper allele (454 aa).

This sequence belongs to the plant acyltransferase family. As to quaternary structure, monomer.

The protein is Inactive tetrahydroanabasine acetyltransferase pauper allele of Lupinus albus (White lupine).